The following is a 718-amino-acid chain: ATP-dependent RNA helicase homolog DQX1 (718 aa).

The Helicase ATP-binding domain occupies H54–P222. G67–S74 serves as a coordination point for ATP. Residues D167–Q170 carry the DEAQ box motif. A Helicase C-terminal domain is found at A245 to D447. A disordered region spans residues Q690–Q718. The span at A696–P708 shows a compositional bias: low complexity.

In terms of tissue distribution, ubiquitous.

It localises to the nucleus. Might be involved in RNA metabolism; it is missing helicase motif III and may not have helicase activity. The chain is ATP-dependent RNA helicase homolog DQX1 (Dqx1) from Mus musculus (Mouse).